Here is a 130-residue protein sequence, read N- to C-terminus: Cuticle protein 14 isoform b (130 aa).

The region spanning 24-90 (IGNYNFGYNE…NVHTNEPGTD (67 aa)) is the Chitin-binding type R&amp;R domain.

This chain is Cuticle protein 14 isoform b, found in Limulus polyphemus (Atlantic horseshoe crab).